We begin with the raw amino-acid sequence, 150 residues long: FAD synthase (150 aa).

Residues 11–12 (TF), 16–19 (HPGH), Asp96, and Tyr124 each bind ATP.

The protein belongs to the archaeal FAD synthase family. Homodimer. A divalent metal cation serves as cofactor.

The enzyme catalyses FMN + ATP + H(+) = FAD + diphosphate. It functions in the pathway cofactor biosynthesis; FAD biosynthesis; FAD from FMN: step 1/1. Catalyzes the transfer of the AMP portion of ATP to flavin mononucleotide (FMN) to produce flavin adenine dinucleotide (FAD) coenzyme. The protein is FAD synthase of Methanococcus maripaludis (strain C7 / ATCC BAA-1331).